A 552-amino-acid polypeptide reads, in one-letter code: Non-structural protein NS1 (552 aa).

The protein belongs to the orbivirus non-structural protein NS1 family.

This Antilocapra americana (Pronghorn) protein is Non-structural protein NS1 (Segment-5).